A 344-amino-acid chain; its full sequence is Succinylglutamate desuccinylase (344 aa).

The Zn(2+) site is built by His63, Glu66, and His160. Glu224 is a catalytic residue.

This sequence belongs to the AspA/AstE family. Succinylglutamate desuccinylase subfamily. Requires Zn(2+) as cofactor.

It carries out the reaction N-succinyl-L-glutamate + H2O = L-glutamate + succinate. The protein operates within amino-acid degradation; L-arginine degradation via AST pathway; L-glutamate and succinate from L-arginine: step 5/5. Functionally, transforms N(2)-succinylglutamate into succinate and glutamate. This chain is Succinylglutamate desuccinylase, found in Shewanella baltica (strain OS223).